Reading from the N-terminus, the 400-residue chain is Tryptophan--tRNA ligase (400 aa).

A 'HIGH' region motif is present at residues 12 to 20; the sequence is PTGALHLGH. The interval 173-241 is insert; it reads REPGFEQKAL…RLFGYLEGAR (69 aa). The 'KMSKS' region signature appears at 265–269; sequence KMSKS. Lys268 is a binding site for ATP. The segment at 280-305 is disordered; sequence KASVEKKVRTMPTDPARVRRTDPGDP. Basic and acidic residues predominate over residues 295-304; sequence ARVRRTDPGD.

This sequence belongs to the class-I aminoacyl-tRNA synthetase family. As to quaternary structure, homodimer.

The protein resides in the cytoplasm. It catalyses the reaction tRNA(Trp) + L-tryptophan + ATP = L-tryptophyl-tRNA(Trp) + AMP + diphosphate + H(+). The polypeptide is Tryptophan--tRNA ligase (trpS) (Ralstonia nicotianae (strain ATCC BAA-1114 / GMI1000) (Ralstonia solanacearum)).